The following is a 201-amino-acid chain: Fas apoptotic inhibitory molecule 1 (201 aa).

This sequence belongs to the FAIM1 family.

It localises to the cytoplasm. In terms of biological role, plays a role as an inducible effector molecule that mediates Fas resistance produced by surface Ig engagement in B cells. The polypeptide is Fas apoptotic inhibitory molecule 1 (FAIM) (Bos taurus (Bovine)).